Here is a 330-residue protein sequence, read N- to C-terminus: D-cysteine desulfhydrase (330 aa).

The residue at position 52 (Lys-52) is an N6-(pyridoxal phosphate)lysine.

This sequence belongs to the ACC deaminase/D-cysteine desulfhydrase family. Homodimer. Pyridoxal 5'-phosphate is required as a cofactor.

The catalysed reaction is D-cysteine + H2O = hydrogen sulfide + pyruvate + NH4(+) + H(+). Catalyzes the alpha,beta-elimination reaction of D-cysteine and of several D-cysteine derivatives. It could be a defense mechanism against D-cysteine. This is D-cysteine desulfhydrase from Yersinia pseudotuberculosis serotype O:1b (strain IP 31758).